We begin with the raw amino-acid sequence, 332 residues long: L-lactate dehydrogenase A chain (332 aa).

A2 carries the post-translational modification N-acetylalanine. N6-acetyllysine; alternate is present on K5. Position 5 is an N6-succinyllysine; alternate (K5). K14 is subject to N6-acetyllysine. 29 to 57 (GAVGMACAISILMKDLADELALVDVMEDK) contacts NAD(+). K57 carries the N6-acetyllysine; alternate modification. K57 participates in a covalent cross-link: Glycyl lysine isopeptide (Lys-Gly) (interchain with G-Cter in SUMO2); alternate. At K81 the chain carries N6-acetyllysine. R99 lines the NAD(+) pocket. Position 106 (R106) interacts with substrate. K118 carries the N6-acetyllysine; alternate modification. K118 carries the post-translational modification N6-succinyllysine; alternate. K126 is modified (N6-acetyllysine). N138 serves as a coordination point for NAD(+). N138 and R169 together coordinate substrate. H193 functions as the Proton acceptor in the catalytic mechanism. N6-acetyllysine is present on residues K224 and K232. The residue at position 239 (Y239) is a Phosphotyrosine. Position 243 is an N6-acetyllysine (K243). T248 is a binding site for substrate. T309 carries the phosphothreonine modification. The residue at position 318 (K318) is an N6-acetyllysine; alternate. Residue K318 is modified to N6-succinyllysine; alternate. T322 bears the Phosphothreonine mark.

It belongs to the LDH/MDH superfamily. LDH family. In terms of assembly, homotetramer. Interacts with PTEN upstream reading frame protein MP31. ISGylated.

The protein localises to the cytoplasm. The catalysed reaction is (S)-lactate + NAD(+) = pyruvate + NADH + H(+). It participates in fermentation; pyruvate fermentation to lactate; (S)-lactate from pyruvate: step 1/1. Its function is as follows. Interconverts simultaneously and stereospecifically pyruvate and lactate with concomitant interconversion of NADH and NAD(+). This chain is L-lactate dehydrogenase A chain (Ldha), found in Mus musculus (Mouse).